Consider the following 421-residue polypeptide: uncharacterized protein (421 aa).

CBS domains follow at residues methionine 13–leucine 74, leucine 74–threonine 133, methionine 139–lysine 195, and methionine 217–methionine 274.

This is an uncharacterized protein from Methanocaldococcus jannaschii (strain ATCC 43067 / DSM 2661 / JAL-1 / JCM 10045 / NBRC 100440) (Methanococcus jannaschii).